The primary structure comprises 213 residues: MPTVLLTGFEPFDGDTSNPSWTAVQEVRDRWDGDAEIQVRQLPVDFAKVDDALRAALAEVDPDVVISVGLAGGIETLEVERVAINVDDARIPDNTGFQPIDEPVVDGGPAAYFSTLPIKAAVAAVRTKGIPAVVSQTAGTYTCNHVFYLLMHELRDRPGTRGGFVHIPYSTEEAIGTDRPYMRMDQLATALTAVVRATLANATDVKVGSGSLD.

Residues glutamate 80, cysteine 143, and histidine 166 contribute to the active site.

Belongs to the peptidase C15 family. In terms of assembly, homotetramer.

The protein localises to the cytoplasm. It catalyses the reaction Release of an N-terminal pyroglutamyl group from a polypeptide, the second amino acid generally not being Pro.. Removes 5-oxoproline from various penultimate amino acid residues except L-proline. The protein is Pyrrolidone-carboxylate peptidase of Clavibacter michiganensis subsp. michiganensis (strain NCPPB 382).